A 340-amino-acid chain; its full sequence is N-acetyl-gamma-glutamyl-phosphate reductase (340 aa).

C146 is a catalytic residue.

Belongs to the NAGSA dehydrogenase family. Type 1 subfamily.

Its subcellular location is the cytoplasm. The catalysed reaction is N-acetyl-L-glutamate 5-semialdehyde + phosphate + NADP(+) = N-acetyl-L-glutamyl 5-phosphate + NADPH + H(+). The protein operates within amino-acid biosynthesis; L-arginine biosynthesis; N(2)-acetyl-L-ornithine from L-glutamate: step 3/4. Its function is as follows. Catalyzes the NADPH-dependent reduction of N-acetyl-5-glutamyl phosphate to yield N-acetyl-L-glutamate 5-semialdehyde. In Rubrobacter xylanophilus (strain DSM 9941 / JCM 11954 / NBRC 16129 / PRD-1), this protein is N-acetyl-gamma-glutamyl-phosphate reductase.